The following is a 483-amino-acid chain: MFS-type transporter ppzB (483 aa).

5 consecutive transmembrane segments (helical) span residues 18–38 (FILT…GILL), 62–82 (AFLA…GWAA), 96–116 (MFLV…LLVV), 149–169 (IGTI…LGGV), and 178–198 (AVFA…ALVI). The N-linked (GlcNAc...) asparagine glycan is linked to N219. A run of 6 helical transmembrane segments spans residues 281–301 (LAML…ATVP), 310–330 (FSSL…FALG), 344–364 (AAAT…GLPE), 374–394 (VALF…VTSP), 424–444 (FGFS…LGGF), and 453–473 (VMGA…FLFV).

The protein belongs to the major facilitator superfamily. TCR/Tet family.

The protein resides in the membrane. In terms of biological role, MFS-type transporter; part of the gene cluster that mediates the biosynthesis of pyrrolopyrazines, secondary metabolites showing insecticidal activity. Probably involved in the secretion of peramine and other pyrrolopyrazines. The protein is MFS-type transporter ppzB of Metarhizium rileyi (strain RCEF 4871) (Nomuraea rileyi).